Consider the following 509-residue polypeptide: MAQPNVQSTSEPILSENDLIAQRHAKLKQIQDKAKETGKSVWPNTFKREHYAADLQEQFKDIDKAQIEGSDKTYVKVAGRVMLNRGSFMVIQDMTGRIQLYVDRKGLPADTLETIKSLDLGDIIAAEGYIGRSGKGDLYVHLEGFELLTKSLRPLPDKFHGLTDTEAKYRKRYLDLIVNEETRKTFEIRAQVVAGIRAFLTNQRFMEVETPMMHVIPGGASAQPFVTHHNALDMELYLRIAPELYLKRLVVGGFERVFEINRNFRNEGVSTRHNPEFTMIEFYQAYADYKDLMQLTENMLEKLALDILGTTDVPYGDEVYSFKGPFKKISMFDAILEHNPDFTPENVNDREFLAKFTQDVLKEQVKPGFGLGKLQTIVFEETVETKLRQPTFITEYPAETSPLARRNDDNPHITDRFEFFIGGRELANGFSELNDPIDQAERFQAQVAEKDAGDDEAMHYDADFIEALEYGLPPTAGQGIGIDRLVMIFANAPSIRDVLLFPHMRRKDV.

E418 and E425 together coordinate Mg(2+).

This sequence belongs to the class-II aminoacyl-tRNA synthetase family. Homodimer. Requires Mg(2+) as cofactor.

The protein resides in the cytoplasm. It carries out the reaction tRNA(Lys) + L-lysine + ATP = L-lysyl-tRNA(Lys) + AMP + diphosphate. This Acinetobacter baylyi (strain ATCC 33305 / BD413 / ADP1) protein is Lysine--tRNA ligase (lysS).